The sequence spans 1356 residues: Vegetative incompatibility protein HET-E-1 (1356 aa).

In terms of domain architecture, NACHT spans 294-629 (RLLWINGDPG…DFLLGTASDK (336 aa)). Residue 300–307 (GDPGKGKT) coordinates GTP. WD repeat units follow at residues 839-869 (GHGS…KIWD), 881-911 (GHGG…KIWD), 923-953 (GHGG…KIWD), 965-995 (GHGS…KIWD), 1007-1037 (GHGG…KIWD), 1049-1079 (GHGG…KIWD), 1091-1121 (GHGD…KIWD), 1133-1163 (GHGG…KIWD), 1175-1205 (GHGG…KIWD), and 1217-1247 (GHGG…KIWD).

Functionally, responsible for vegetative incompatibility through specific interactions with different alleles of the unlinked gene, het-c. The polypeptide is Vegetative incompatibility protein HET-E-1 (HET-E1) (Podospora anserina (Pleurage anserina)).